A 235-amino-acid polypeptide reads, in one-letter code: Phosphoribosylaminoimidazole-succinocarboxamide synthase (235 aa).

This sequence belongs to the SAICAR synthetase family.

The enzyme catalyses 5-amino-1-(5-phospho-D-ribosyl)imidazole-4-carboxylate + L-aspartate + ATP = (2S)-2-[5-amino-1-(5-phospho-beta-D-ribosyl)imidazole-4-carboxamido]succinate + ADP + phosphate + 2 H(+). It functions in the pathway purine metabolism; IMP biosynthesis via de novo pathway; 5-amino-1-(5-phospho-D-ribosyl)imidazole-4-carboxamide from 5-amino-1-(5-phospho-D-ribosyl)imidazole-4-carboxylate: step 1/2. This Chlorobaculum tepidum (strain ATCC 49652 / DSM 12025 / NBRC 103806 / TLS) (Chlorobium tepidum) protein is Phosphoribosylaminoimidazole-succinocarboxamide synthase.